A 127-amino-acid chain; its full sequence is Glycine cleavage system H protein 1 (127 aa).

The region spanning 20 to 101 is the Lipoyl-binding domain; that stretch reads LLTVGITAYA…LGEAWFFRFR (82 aa). Position 60 is an N6-lipoyllysine (lysine 60).

It belongs to the GcvH family. In terms of assembly, the glycine cleavage system is composed of four proteins: P, T, L and H. Requires (R)-lipoate as cofactor.

Its function is as follows. The glycine cleavage system catalyzes the degradation of glycine. The H protein shuttles the methylamine group of glycine from the P protein to the T protein. The polypeptide is Glycine cleavage system H protein 1 (Pseudomonas aeruginosa (strain ATCC 15692 / DSM 22644 / CIP 104116 / JCM 14847 / LMG 12228 / 1C / PRS 101 / PAO1)).